We begin with the raw amino-acid sequence, 362 residues long: Isopentenyl-diphosphate delta-isomerase (362 aa).

Residue 6–7 (RK) participates in substrate binding. FMN-binding positions include 65 to 67 (SIT), S95, and N124. 95-97 (SQR) is a binding site for substrate. Position 158 (Q158) interacts with substrate. Residue E159 participates in Mg(2+) binding. FMN contacts are provided by residues K189, T219, 269–271 (GVR), and 290–291 (AL).

Belongs to the IPP isomerase type 2 family. Homooctamer. Dimer of tetramers. It depends on FMN as a cofactor. Requires NADPH as cofactor. The cofactor is Mg(2+).

The protein resides in the cytoplasm. It catalyses the reaction isopentenyl diphosphate = dimethylallyl diphosphate. In terms of biological role, involved in the biosynthesis of isoprenoids. Catalyzes the 1,3-allylic rearrangement of the homoallylic substrate isopentenyl (IPP) to its allylic isomer, dimethylallyl diphosphate (DMAPP). This chain is Isopentenyl-diphosphate delta-isomerase, found in Methanococcoides burtonii (strain DSM 6242 / NBRC 107633 / OCM 468 / ACE-M).